Here is a 279-residue protein sequence, read N- to C-terminus: Octanoyl-[GcvH]:protein N-octanoyltransferase (279 aa).

Positions 48–253 (ETSPPVIRLW…TLEKLSDEIV (206 aa)) constitute a BPL/LPL catalytic domain. Cys152 serves as the catalytic Acyl-thioester intermediate.

Belongs to the octanoyltransferase LipL family.

The catalysed reaction is N(6)-octanoyl-L-lysyl-[glycine-cleavage complex H protein] + L-lysyl-[lipoyl-carrier protein] = N(6)-octanoyl-L-lysyl-[lipoyl-carrier protein] + L-lysyl-[glycine-cleavage complex H protein]. It functions in the pathway protein modification; protein lipoylation via endogenous pathway; protein N(6)-(lipoyl)lysine from octanoyl-[acyl-carrier-protein]. Catalyzes the amidotransfer (transamidation) of the octanoyl moiety from octanoyl-GcvH to the lipoyl domain of the E2 subunit of lipoate-dependent enzymes. This is Octanoyl-[GcvH]:protein N-octanoyltransferase from Oceanobacillus iheyensis (strain DSM 14371 / CIP 107618 / JCM 11309 / KCTC 3954 / HTE831).